The sequence spans 175 residues: Orotate phosphoribosyltransferase (175 aa).

5-phospho-alpha-D-ribose 1-diphosphate is bound by residues Arg89, Lys90, Lys93, and Glu115 to Ser123. Orotate-binding residues include Thr119 and Arg147.

Belongs to the purine/pyrimidine phosphoribosyltransferase family. PyrE subfamily. In terms of assembly, homodimer. Requires Mg(2+) as cofactor.

It catalyses the reaction orotidine 5'-phosphate + diphosphate = orotate + 5-phospho-alpha-D-ribose 1-diphosphate. It functions in the pathway pyrimidine metabolism; UMP biosynthesis via de novo pathway; UMP from orotate: step 1/2. Catalyzes the transfer of a ribosyl phosphate group from 5-phosphoribose 1-diphosphate to orotate, leading to the formation of orotidine monophosphate (OMP). This is Orotate phosphoribosyltransferase from Halobacterium salinarum (strain ATCC 700922 / JCM 11081 / NRC-1) (Halobacterium halobium).